We begin with the raw amino-acid sequence, 305 residues long: Probable lipid kinase YegS-like (305 aa).

The DAGKc domain maps to 1–129; the sequence is MTQRRAMLIL…VDLGEVGGKL (129 aa). ATP-binding positions include Thr-39, 65-71, and Thr-92; that span reads GDGTLRD. The Mg(2+) site is built by Leu-210, Asp-213, and Leu-215. Glu-268 functions as the Proton acceptor in the catalytic mechanism.

The protein belongs to the diacylglycerol/lipid kinase family. YegS lipid kinase subfamily. Mg(2+) serves as cofactor. It depends on Ca(2+) as a cofactor.

Its subcellular location is the cytoplasm. Its function is as follows. Probably phosphorylates lipids; the in vivo substrate is unknown. The sequence is that of Probable lipid kinase YegS-like from Pseudomonas syringae pv. tomato (strain ATCC BAA-871 / DC3000).